We begin with the raw amino-acid sequence, 104 residues long: Ycf49-like protein (104 aa).

A run of 3 helical transmembrane segments spans residues 6-26 (IPTW…IALV), 41-61 (LAWG…WHFF), and 73-93 (LQAL…WWIY).

Belongs to the ycf49 family.

It localises to the cell membrane. The protein is Ycf49-like protein of Synechocystis sp. (strain ATCC 27184 / PCC 6803 / Kazusa).